The following is a 305-amino-acid chain: Glutaminase (305 aa).

Ser61, Asn113, Glu158, Asn165, Tyr189, Tyr241, and Val259 together coordinate substrate.

This sequence belongs to the glutaminase family. Homotetramer.

The enzyme catalyses L-glutamine + H2O = L-glutamate + NH4(+). The sequence is that of Glutaminase from Clostridium botulinum (strain 657 / Type Ba4).